Here is a 283-residue protein sequence, read N- to C-terminus: Bis(5'-nucleosyl)-tetraphosphatase, symmetrical (283 aa).

It belongs to the Ap4A hydrolase family.

It catalyses the reaction P(1),P(4)-bis(5'-adenosyl) tetraphosphate + H2O = 2 ADP + 2 H(+). Hydrolyzes diadenosine 5',5'''-P1,P4-tetraphosphate to yield ADP. This is Bis(5'-nucleosyl)-tetraphosphatase, symmetrical from Pseudomonas fluorescens (strain SBW25).